The primary structure comprises 205 residues: Ribosomal RNA small subunit methyltransferase G (205 aa).

Residues G70, L75, 124-125 (IE), and R138 contribute to the S-adenosyl-L-methionine site.

Belongs to the methyltransferase superfamily. RNA methyltransferase RsmG family.

It localises to the cytoplasm. It catalyses the reaction guanosine(527) in 16S rRNA + S-adenosyl-L-methionine = N(7)-methylguanosine(527) in 16S rRNA + S-adenosyl-L-homocysteine. Specifically methylates the N7 position of guanine in position 527 of 16S rRNA. This Ruegeria sp. (strain TM1040) (Silicibacter sp.) protein is Ribosomal RNA small subunit methyltransferase G.